The sequence spans 131 residues: Arsenate reductase 2 (131 aa).

Catalysis depends on nucleophile residues Cys-10, Cys-82, and Cys-89. Cystine bridges form between Cys-10–Cys-82 and Cys-82–Cys-89.

The protein belongs to the low molecular weight phosphotyrosine protein phosphatase family. Thioredoxin-coupled ArsC subfamily.

The protein localises to the cytoplasm. It carries out the reaction arsenate + [thioredoxin]-dithiol + H(+) = arsenite + [thioredoxin]-disulfide + H2O. Functionally, catalyzes the reduction of arsenate [As(V)] to arsenite [As(III)]. The protein is Arsenate reductase 2 of Staphylococcus epidermidis (strain ATCC 35984 / DSM 28319 / BCRC 17069 / CCUG 31568 / BM 3577 / RP62A).